The sequence spans 335 residues: UPF0353 protein MAP_1207 (335 aa).

2 helical membrane-spanning segments follow: residues 18–38 and 67–87; these read WFFLFLLVVAGLAALYILMQL and LPAILLVASLVLFTIAMAGPT. The region spanning 98 to 294 is the VWFA domain; that stretch reads VVMLVIDVSQ…QELKSVYATL (197 aa). Residues 309–329 form a helical membrane-spanning segment; that stretch reads VGWVRLGALVLALAALTALLI.

This sequence belongs to the UPF0353 family.

It localises to the cell membrane. This is UPF0353 protein MAP_1207 from Mycolicibacterium paratuberculosis (strain ATCC BAA-968 / K-10) (Mycobacterium paratuberculosis).